We begin with the raw amino-acid sequence, 773 residues long: Polyribonucleotide nucleotidyltransferase (773 aa).

2 residues coordinate Mg(2+): aspartate 490 and aspartate 496. One can recognise a KH domain in the interval 557-616; sequence PKIDTITIPVDKIKVVIGKGGEQIDKIIAETGVKIDIDDEGLCSIFSSDQAAIDRAKEII. The S1 motif domain occupies 626 to 694; it reads GEIYDAKVVR…DKGRVDASMR (69 aa). A compositionally biased stretch (basic and acidic residues) spans 700–721; the sequence is PEGYVEPERKPRERRENGDRRK. The tract at residues 700–773 is disordered; that stretch reads PEGYVEPERK…FPELSTKKPE (74 aa). A compositionally biased stretch (low complexity) spans 739-748; sequence RNNQGNKVGN. Residues 751–773 are compositionally biased toward basic and acidic residues; the sequence is FELRERKSHIDEEFPELSTKKPE.

Belongs to the polyribonucleotide nucleotidyltransferase family. Requires Mg(2+) as cofactor.

Its subcellular location is the cytoplasm. The enzyme catalyses RNA(n+1) + phosphate = RNA(n) + a ribonucleoside 5'-diphosphate. Its function is as follows. Involved in mRNA degradation. Catalyzes the phosphorolysis of single-stranded polyribonucleotides processively in the 3'- to 5'-direction. The protein is Polyribonucleotide nucleotidyltransferase of Lactococcus lactis subsp. lactis (strain IL1403) (Streptococcus lactis).